A 44-amino-acid chain; its full sequence is Thymosin beta-4 (44 aa).

Positions 1–25 are enriched in basic and acidic residues; that stretch reads MADKPDMAEIEKFDKSKLKKTETQE. The disordered stretch occupies residues 1–44; the sequence is MADKPDMAEIEKFDKSKLKKTETQEKNPLPSKETIEQEKQAGES. The residue at position 2 (Ala-2) is an N-acetylalanine. An N6-acetyllysine modification is found at Lys-4. Lys-12 carries the post-translational modification N6-acetyllysine; alternate. Residue Lys-12 forms a Glycyl lysine isopeptide (Lys-Gly) (interchain with G-Cter in SUMO2); alternate linkage. Residue Thr-23 is modified to Phosphothreonine. The residue at position 26 (Lys-26) is an N6-acetyllysine. Ser-31 bears the Phosphoserine mark. Lys-32 bears the N6-acetyllysine mark. Over residues 33–44 the composition is skewed to basic and acidic residues; that stretch reads ETIEQEKQAGES. Phosphothreonine is present on Thr-34. Lys-39 is modified (N6-acetyllysine).

Belongs to the thymosin beta family. In terms of tissue distribution, originally found in thymus but it is widely distributed in many tissues.

The protein resides in the cytoplasm. It localises to the cytoskeleton. Plays an important role in the organization of the cytoskeleton. Binds to and sequesters actin monomers (G actin) and therefore inhibits actin polymerization. Its function is as follows. Seraspenide inhibits the entry of hematopoietic pluripotent stem cells into the S-phase. This Oryctolagus cuniculus (Rabbit) protein is Thymosin beta-4 (TMSB4).